The sequence spans 72 residues: Beta-defensin 104A (72 aa).

The signal sequence occupies residues 1–22 (MRRLVLLLAISLLLYQDLPVRS). Cystine bridges form between Cys30-Cys57, Cys37-Cys51, and Cys41-Cys58.

Belongs to the beta-defensin family.

The protein localises to the secreted. Its function is as follows. Has antimicrobial activity. In Pongo pygmaeus (Bornean orangutan), this protein is Beta-defensin 104A (DEFB104A).